A 364-amino-acid polypeptide reads, in one-letter code: Fructose-bisphosphate aldolase C (364 aa).

The residue at position 5 (Y5) is a Phosphotyrosine. Residues S36, S39, and S45 each carry the phosphoserine modification. R56 is a substrate binding site. K111 carries the post-translational modification N6-acetyllysine. S132 is modified (phosphoserine). Residue K147 coordinates substrate. Catalysis depends on E188, which acts as the Proton acceptor. Residue K230 is the Schiff-base intermediate with dihydroxyacetone-P of the active site.

It belongs to the class I fructose-bisphosphate aldolase family. In terms of assembly, homotetramer. Interacts with ATP6V1E1.

The catalysed reaction is beta-D-fructose 1,6-bisphosphate = D-glyceraldehyde 3-phosphate + dihydroxyacetone phosphate. The protein operates within carbohydrate degradation; glycolysis; D-glyceraldehyde 3-phosphate and glycerone phosphate from D-glucose: step 4/4. This chain is Fructose-bisphosphate aldolase C (ALDOC), found in Pan troglodytes (Chimpanzee).